The primary structure comprises 725 residues: Probable ATP-dependent RNA helicase DDX4 (725 aa).

The segment at 1–251 is disordered; it reads MGDEDWEAEI…GPKVTYIPPP (251 aa). The span at 28 to 43 shows a compositional bias: polar residues; it reads SGENGDNFNRTPTSSS. The segment covering 70 to 79 has biased composition (basic and acidic residues); sequence DAGESNKRDN. 2 stretches are compositionally biased toward low complexity: residues 143–156 and 196–206; these read SGPS…SFRG and GDTSQSRSGSG. Phosphoserine is present on residues serine 223 and serine 227. The interaction with RANBP9 stretch occupies residues 229–248; it reads KSEAEGGESSDTQGPKVTYI. Residues 289–317 carry the Q motif motif; it reads LTFEEANLCQTLNNNIAKAGYTKLTPVQK. One can recognise a Helicase ATP-binding domain in the interval 320–503; sequence IPIILAGRDL…AEFLKSNYLF (184 aa). 333 to 340 is an ATP binding site; sequence AQTGSGKT. A DEAD box motif is present at residues 447 to 450; it reads DEAD. The Helicase C-terminal domain maps to 531–676; that stretch reads KLVEILRNIG…DVPAWLEEIA (146 aa). Positions 702–725 are disordered; sequence KSSLNTAGFSSSQAPNPVDDESWD. Residues 703–716 are compositionally biased toward polar residues; sequence SSLNTAGFSSSQAP. Residue serine 723 is modified to Phosphoserine.

The protein belongs to the DEAD box helicase family. DDX4/VASA subfamily. Found in a mRNP complex, at least composed of TDRD1, TDRD6, TDRD7 and DDX4. Interacts with RANBP9. Interacts with RANBP10. Interacts with PIWIL2 and MAEL. Interacts with BMAL1 and CLOCK. Interacts with Tex19.1 and, probably, Tex19.2. Interacts with RBM46.

It localises to the cytoplasm. The protein localises to the perinuclear region. The catalysed reaction is ATP + H2O = ADP + phosphate + H(+). Functionally, ATP-dependent RNA helicase required during spermatogenesis to repress transposable elements and preventing their mobilization, which is essential for the germline integrity. Acts via the piRNA metabolic process, which mediates the repression of transposable elements during meiosis by forming complexes composed of piRNAs and Piwi proteins and governs the methylation and subsequent repression of transposons. Involved in the secondary piRNAs metabolic process, the production of piRNAs in fetal male germ cells through a ping-pong amplification cycle. Required for PIWIL2 slicing-triggered piRNA biogenesis: helicase activity enables utilization of one of the slice cleavage fragments generated by PIWIL2 and processing these pre-piRNAs into piRNAs. In Macaca fascicularis (Crab-eating macaque), this protein is Probable ATP-dependent RNA helicase DDX4 (DDX4).